We begin with the raw amino-acid sequence, 152 residues long: Transcriptional regulator MraZ (152 aa).

SpoVT-AbrB domains lie at 5–52 (ATMV…PLPE) and 81–124 (ASEC…DEQT).

It belongs to the MraZ family. In terms of assembly, forms oligomers.

It localises to the cytoplasm. It is found in the nucleoid. Negatively regulates its own expression and that of the subsequent genes in the proximal part of the division and cell wall (dcw) gene cluster. Acts by binding directly to DNA. May also regulate the expression of genes outside the dcw cluster. This is Transcriptional regulator MraZ from Yersinia pestis bv. Antiqua (strain Antiqua).